A 117-amino-acid polypeptide reads, in one-letter code: SPbeta prophage-derived uncharacterized protein YosL (117 aa).

The sequence is that of SPbeta prophage-derived uncharacterized protein YosL (yosL) from Bacillus subtilis (strain 168).